The primary structure comprises 488 residues: Glutamyl-tRNA(Gln) amidotransferase subunit A (488 aa).

Active-site charge relay system residues include Lys-76 and Ser-152. Ser-176 acts as the Acyl-ester intermediate in catalysis.

Belongs to the amidase family. GatA subfamily. As to quaternary structure, heterotrimer of A, B and C subunits.

It carries out the reaction L-glutamyl-tRNA(Gln) + L-glutamine + ATP + H2O = L-glutaminyl-tRNA(Gln) + L-glutamate + ADP + phosphate + H(+). Its function is as follows. Allows the formation of correctly charged Gln-tRNA(Gln) through the transamidation of misacylated Glu-tRNA(Gln) in organisms which lack glutaminyl-tRNA synthetase. The reaction takes place in the presence of glutamine and ATP through an activated gamma-phospho-Glu-tRNA(Gln). This chain is Glutamyl-tRNA(Gln) amidotransferase subunit A, found in Oceanobacillus iheyensis (strain DSM 14371 / CIP 107618 / JCM 11309 / KCTC 3954 / HTE831).